A 429-amino-acid polypeptide reads, in one-letter code: Glutamate-1-semialdehyde 2,1-aminomutase (429 aa).

Residue Lys266 is modified to N6-(pyridoxal phosphate)lysine.

It belongs to the class-III pyridoxal-phosphate-dependent aminotransferase family. HemL subfamily. Pyridoxal 5'-phosphate serves as cofactor.

Its subcellular location is the cytoplasm. The enzyme catalyses (S)-4-amino-5-oxopentanoate = 5-aminolevulinate. The protein operates within porphyrin-containing compound metabolism; protoporphyrin-IX biosynthesis; 5-aminolevulinate from L-glutamyl-tRNA(Glu): step 2/2. The chain is Glutamate-1-semialdehyde 2,1-aminomutase (hemL) from Aeropyrum pernix (strain ATCC 700893 / DSM 11879 / JCM 9820 / NBRC 100138 / K1).